We begin with the raw amino-acid sequence, 600 residues long: Aspartate--tRNA(Asp/Asn) ligase (600 aa).

Glu-174 serves as a coordination point for L-aspartate. The interval 198 to 201 is aspartate; sequence QLFK. Residue Arg-220 participates in L-aspartate binding. ATP is bound by residues 220–222 and Gln-229; that span reads RDE. His-457 contacts L-aspartate. Glu-491 lines the ATP pocket. Arg-498 provides a ligand contact to L-aspartate. 543–546 lines the ATP pocket; that stretch reads GLDR.

It belongs to the class-II aminoacyl-tRNA synthetase family. Type 1 subfamily. Homodimer.

The protein resides in the cytoplasm. It carries out the reaction tRNA(Asx) + L-aspartate + ATP = L-aspartyl-tRNA(Asx) + AMP + diphosphate. Aspartyl-tRNA synthetase with relaxed tRNA specificity since it is able to aspartylate not only its cognate tRNA(Asp) but also tRNA(Asn). Reaction proceeds in two steps: L-aspartate is first activated by ATP to form Asp-AMP and then transferred to the acceptor end of tRNA(Asp/Asn). The sequence is that of Aspartate--tRNA(Asp/Asn) ligase from Burkholderia vietnamiensis (strain G4 / LMG 22486) (Burkholderia cepacia (strain R1808)).